The chain runs to 173 residues: Globin, cuticular isoform (173 aa).

Positions 1–16 (MLWFVAVCFAIASVSA) are cleaved as a signal peptide. The region spanning 17 to 166 (MSPADVKKHT…FNSEAQHQLE (150 aa)) is the Globin domain. His113 provides a ligand contact to heme b.

Belongs to the globin family. As to expression, expressed only by adult nematodes in the gut.

Its subcellular location is the secreted. The protein resides in the extracellular space. The protein is Globin, cuticular isoform (GLBC) of Nippostrongylus brasiliensis (Rat hookworm).